We begin with the raw amino-acid sequence, 1026 residues long: Multidrug resistance protein MdtC (1026 aa).

A run of 11 helical transmembrane segments spans residues 15-35 (ILIA…LPVA), 333-353 (EVEE…FLFL), 360-380 (LIPA…MYLC), 387-407 (LSLM…IVVL), 431-451 (VGFT…PLLL), 463-483 (FAVT…TLTP), 528-548 (LVGV…IAIP), 853-873 (LILI…LYES), 897-917 (LFNA…IGIV), 953-973 (PIMM…LSGG), and 984-1004 (ITIV…TPVV).

It belongs to the resistance-nodulation-cell division (RND) (TC 2.A.6) family. MdtC subfamily. In terms of assembly, part of a tripartite efflux system composed of MdtA, MdtB and MdtC. MdtC forms a heteromultimer with MdtB.

It localises to the cell inner membrane. This Salmonella paratyphi A (strain AKU_12601) protein is Multidrug resistance protein MdtC.